We begin with the raw amino-acid sequence, 152 residues long: Calmodulin (152 aa).

At alanine 2 the chain carries N-acetylalanine. EF-hand domains lie at 10 to 45, 46 to 81, 83 to 118, and 119 to 152; these read EQIA…LGQN, PTEA…KMQD, DTEE…LGEK, and LTNE…IVRN. Positions 23, 25, 27, 29, 34, 59, 61, 63, 65, 70, 96, 98, 100, 102, 107, 132, 134, 136, 138, and 143 each coordinate Ca(2+).

Belongs to the calmodulin family. As to quaternary structure, interacts with cmbB, numA/nucleomorphin, pgkA/phosphoglycerate kinase, and thyB/thymidine kinase in the presence of Ca(2+). Interacts with dwwA in the absence of Ca(2+). The N-terminus is blocked. In terms of processing, trimethylation of Lys-118 observed in other calmodulins is absent here.

The protein resides in the contractile vacuole. In terms of biological role, calmodulin mediates the control of a large number of enzymes, ion channels and other proteins by Ca(2+). Among the enzymes to be stimulated by the calmodulin-Ca(2+) complex are a number of protein kinases and phosphatases. This Dictyostelium discoideum (Social amoeba) protein is Calmodulin (calA).